A 660-amino-acid chain; its full sequence is Acetyl-coenzyme A synthetase (660 aa).

CoA is bound by residues 197–200 and threonine 317; that span reads RGGK. Residues 397 to 399, 421 to 426, aspartate 512, and arginine 528 each bind ATP; these read GEP and DTFWQT. Residue serine 536 participates in CoA binding. An ATP-binding site is contributed by arginine 539. 2 residues coordinate Mg(2+): valine 550 and valine 555. An N6-acetyllysine modification is found at lysine 625.

The protein belongs to the ATP-dependent AMP-binding enzyme family. The cofactor is Mg(2+). Acetylated. Deacetylation by the SIR2-homolog deacetylase activates the enzyme.

The enzyme catalyses acetate + ATP + CoA = acetyl-CoA + AMP + diphosphate. Catalyzes the conversion of acetate into acetyl-CoA (AcCoA), an essential intermediate at the junction of anabolic and catabolic pathways. AcsA undergoes a two-step reaction. In the first half reaction, AcsA combines acetate with ATP to form acetyl-adenylate (AcAMP) intermediate. In the second half reaction, it can then transfer the acetyl group from AcAMP to the sulfhydryl group of CoA, forming the product AcCoA. The polypeptide is Acetyl-coenzyme A synthetase (Cupriavidus metallidurans (strain ATCC 43123 / DSM 2839 / NBRC 102507 / CH34) (Ralstonia metallidurans)).